We begin with the raw amino-acid sequence, 471 residues long: Trehalose-binding lipoprotein LpqY (471 aa).

Positions 1 to 28 (MDGRQVVRARRWCATAAVALMTASTVAA) are cleaved as a signal peptide. Cys29 is lipidated: N-palmitoyl cysteine. Residue Cys29 is the site of S-diacylglycerol cysteine attachment. Alpha,alpha-trehalose contacts are provided by Asn45, Glu46, Gln79, Asp100, Asn154, Tyr198, Trp279, Tyr281, Gly354, and Arg424. Cys57 and Cys375 are disulfide-bonded.

Belongs to the bacterial solute-binding protein 1 family. Monomer. The complex is composed of two ATP-binding proteins (SugC), two transmembrane proteins (SugA and SugB) and a solute-binding protein (LpqY).

It is found in the cell inner membrane. Functionally, part of the ABC transporter complex LpqY-SugA-SugB-SugC, which is highly specific for uptake of trehalose. Involved in the recycling of extracellular trehalose released from trehalose-containing molecules synthesized by M.thermoresistibile. Trehalose uptake is essential for virulence. Binds deuterated trehalose with similar high affinity to trehalose, trehalose analogs including galactotrehalose, 4-azido-4-deoxy-trehalose, 6-azido-6-deoxy-trehalose, 3-azido-3-deoxy-trehalose and mannotrehalose in the order of decreasing affinity, respectively, and 2-azido-2-deoxy-trehalose and kojibiose (alpha1,2-glycosidic bond) with very low affinity. Does not recognize single glucose, 6-amino-6-deoxy-trehalose, trehalose-6-phosphate, nigerose (alpha1,3-glycosidic bond), maltose (alpha1,4-glycosidic bond), isomaltose (alpha1,6-glycosidic bond) or glycerophosphocholine. Decreased recognition of alpha,beta-trehalose and almost no recognition of beta,beta-trehalose. Substrate specificity indicates a strict requirement for an alpha1,1-linked disaccharide. This is Trehalose-binding lipoprotein LpqY from Mycolicibacterium thermoresistibile (strain ATCC 19527 / DSM 44167 / CIP 105390 / JCM 6362 / NCTC 10409 / 316) (Mycobacterium thermoresistibile).